The primary structure comprises 287 residues: MAITAAASRLGTSAFSDAPPVELRANWSEEDLETVIRAVYRQVLGNDYVMASERLVSAESLLRNGKITVREFVRAVAKSELYKEKFLYGNFQTRVIELNYKHLLGRAPYDESEVIFHLDLYENEGFDADIDSYIDSPEYTNSFGDWVVPYYRGFNTQPGQKTVGFNRIFRLYRGYANSDRAQAEGSMSRLARDLATNRANTVVPPSNSDTAFAYYTPSADVPPRACLGGSFGESGRVYRIEVAGIRQPGYPGVRRSSTAFLVPYEQLSAKMQQLQRTGARIISVNPA.

The 179-residue stretch at 2 to 180 (AITAAASRLG…LYRGYANSDR (179 aa)) folds into the PBS-linker domain. One can recognise a CpcD-like domain in the interval 235–287 (GRVYRIEVAGIRQPGYPGVRRSSTAFLVPYEQLSAKMQQLQRTGARIISVNPA).

Belongs to the phycobilisome linker protein family.

The protein resides in the cellular thylakoid membrane. Functionally, rod linker protein, associated with phycocyanin. Linker polypeptides determine the state of aggregation and the location of the disk-shaped phycobiliprotein units within the phycobilisome and modulate their spectroscopic properties in order to mediate a directed and optimal energy transfer. This is Phycobilisome 32.1 kDa linker polypeptide, phycocyanin-associated, rod (cpcC) from Thermosynechococcus vestitus (strain NIES-2133 / IAM M-273 / BP-1).